We begin with the raw amino-acid sequence, 137 residues long: Transcription antitermination protein NusB (137 aa).

This sequence belongs to the NusB family.

In terms of biological role, involved in transcription antitermination. Required for transcription of ribosomal RNA (rRNA) genes. Binds specifically to the boxA antiterminator sequence of the ribosomal RNA (rrn) operons. This is Transcription antitermination protein NusB from Clavibacter sepedonicus (Clavibacter michiganensis subsp. sepedonicus).